Here is a 233-residue protein sequence, read N- to C-terminus: uncharacterized protein (233 aa).

This is an uncharacterized protein from Methanocaldococcus jannaschii (strain ATCC 43067 / DSM 2661 / JAL-1 / JCM 10045 / NBRC 100440) (Methanococcus jannaschii).